A 364-amino-acid polypeptide reads, in one-letter code: Histidinol-phosphate aminotransferase 1 (364 aa).

Lys211 is subject to N6-(pyridoxal phosphate)lysine.

The protein belongs to the class-II pyridoxal-phosphate-dependent aminotransferase family. Histidinol-phosphate aminotransferase subfamily. As to quaternary structure, homodimer. It depends on pyridoxal 5'-phosphate as a cofactor.

The catalysed reaction is L-histidinol phosphate + 2-oxoglutarate = 3-(imidazol-4-yl)-2-oxopropyl phosphate + L-glutamate. Its pathway is amino-acid biosynthesis; L-histidine biosynthesis; L-histidine from 5-phospho-alpha-D-ribose 1-diphosphate: step 7/9. This chain is Histidinol-phosphate aminotransferase 1, found in Legionella pneumophila (strain Lens).